The primary structure comprises 617 residues: Na(+)/H(+) antiporter NhaA 1 (617 aa).

Residues 1 to 433 form a na(+)/H(+) antiporter NhaA region; it reads MTVTEQTTAR…GWAIFRITDW (433 aa). The next 11 membrane-spanning stretches (helical) occupy residues 33-53, 75-95, 113-133, 141-161, 171-191, 194-214, 234-254, 304-324, 340-360, 378-398, and 411-431; these read AAAL…SPWA, MTVK…IVGL, AVPV…FLAF, HAWG…LAII, LFLL…IAVF, DAIQ…LALV, VALY…ALLI, VGPA…AGVL, WGVV…ATWL, IAGG…IVDI, and IGVL…FRIT. The region spanning 434 to 617 is the Thioredoxin domain; the sequence is LSPPEPVGLK…LIRALEAGRR (184 aa).

It in the N-terminal section; belongs to the NhaA Na(+)/H(+) (TC 2.A.33) antiporter family.

It is found in the cell membrane. The catalysed reaction is Na(+)(in) + 2 H(+)(out) = Na(+)(out) + 2 H(+)(in). Its function is as follows. Na(+)/H(+) antiporter that extrudes sodium in exchange for external protons. The sequence is that of Na(+)/H(+) antiporter NhaA 1 from Mycolicibacterium vanbaalenii (strain DSM 7251 / JCM 13017 / BCRC 16820 / KCTC 9966 / NRRL B-24157 / PYR-1) (Mycobacterium vanbaalenii).